Reading from the N-terminus, the 91-residue chain is Small ribosomal subunit protein bS18 (91 aa).

The protein belongs to the bacterial ribosomal protein bS18 family. As to quaternary structure, part of the 30S ribosomal subunit. Forms a tight heterodimer with protein bS6.

Binds as a heterodimer with protein bS6 to the central domain of the 16S rRNA, where it helps stabilize the platform of the 30S subunit. This chain is Small ribosomal subunit protein bS18, found in Paraburkholderia phymatum (strain DSM 17167 / CIP 108236 / LMG 21445 / STM815) (Burkholderia phymatum).